Here is a 182-residue protein sequence, read N- to C-terminus: NADH-quinone oxidoreductase subunit I (182 aa).

2 consecutive 4Fe-4S ferredoxin-type domains span residues 52 to 82 and 92 to 121; these read LTRD…LQKA and DFFR…LTPD. Residues cysteine 62, cysteine 65, cysteine 68, cysteine 72, cysteine 101, cysteine 104, cysteine 107, and cysteine 111 each coordinate [4Fe-4S] cluster.

The protein belongs to the complex I 23 kDa subunit family. As to quaternary structure, NDH-1 is composed of 13 different subunits. Subunits NuoA, H, J, K, L, M, N constitute the membrane sector of the complex. [4Fe-4S] cluster is required as a cofactor.

The protein resides in the cell inner membrane. It catalyses the reaction a quinone + NADH + 5 H(+)(in) = a quinol + NAD(+) + 4 H(+)(out). Its function is as follows. NDH-1 shuttles electrons from NADH, via FMN and iron-sulfur (Fe-S) centers, to quinones in the respiratory chain. The immediate electron acceptor for the enzyme in this species is believed to be ubiquinone. Couples the redox reaction to proton translocation (for every two electrons transferred, four hydrogen ions are translocated across the cytoplasmic membrane), and thus conserves the redox energy in a proton gradient. This Pseudomonas syringae pv. syringae (strain B728a) protein is NADH-quinone oxidoreductase subunit I.